Here is a 299-residue protein sequence, read N- to C-terminus: MAEEQARHVKNGLECIRALKAEPIGSLAIGEAMAAWSEISDNPGQERATYKEEKAGGSGLSKPCLSAIGSTEGGAPRIRGQGSGESDDDTETLGIPSRNLQASSTGLQCHYVYDHSGEAVKGIQDADSIMVQSGLDGDSTLSEGDNESENSDVDIGEPDTEGYAITDRGSAPISMGFRASDVETAEGGEIHELLRLQSRGNNFPKLGKTLNVPPPPDPGRASTSETPIKKGHRREISLIWDGDRVFIDRWCNPMCSKVTLGTIRARCTCGECPRVCEQCRTDTGVDTRIWYHNLPEIPE.

Residues Ser-40 to Glu-91 form a disordered region. Residues His-110 to Val-120 form an interaction with host STAT1 region. Residues Ser-133 to Tyr-163 form a disordered region. A compositionally biased stretch (acidic residues) spans Gly-144 to Thr-160. Residues His-232, Cys-251, Cys-255, Cys-267, Cys-269, Cys-272, Cys-276, and Cys-279 each contribute to the Zn(2+) site.

Belongs to the paramyxoviruses V protein family. As to quaternary structure, interacts with host IFIH1/MDA5 and DHX58/LGP2; these interactions are involved in the inhibition of the host type I interferon signaling pathway. Interacts with host TYK2; this interaction inhibits the type I interferon signaling pathway without affecting the type II pathway. Interacts with host IRF7; this interaction inhibits IRF7 translocation to the nucleus. Interacts with host CHUK. Interacts with host RELA/p65; this interaction inhibits the nuclear translocation of NF-KappaB. Interacts (via N-terminus) with host STAT1 and JAK1; these interactions inhibit STAT1 phosphorylation by Jak1 and thereby the type I interferon signaling pathway. Interacts (via C-terminus) with host STAT2; this interaction is involved in the inhibition of the host type I interferon signaling pathway. Forms a complex with host PPP1CA and PPP1CC; this interaction prevents dephosphorylation of host IFIH1/MDA5 and leads to the inhibition of the host type I interferon signaling pathway. Interacts with host IRF9; this interaction prevents the binding of IRF9 to STAT2 and thereby the type I interferon signaling pathway. Interacts with host RIGI regulatory protein (via CARDs domain) and host TRIM25 (via SPRY domain); these interactions prevent TRIM25-mediated ubiquitination of RIG-I and disrupts downstream RIG-I signaling.

Its subcellular location is the host cytoplasm. Functionally, plays an essential role in the inhibition of host immune response. Prevents the establishment of cellular antiviral state by blocking interferon-alpha/beta (IFN-alpha/beta) production and signaling pathway. Interacts with host IFIH1/MDA5 and DHX58/LGP2 to inhibit the transduction pathway involved in the activation of IFN-beta promoter, thus protecting the virus against cell antiviral state. Blocks the type I interferon signaling pathway by interacting with host TYK2 and thereby inhibiting downstream STAT1 and STAT2 phosphorylation. Blocks the type I interferon signaling pathway by disrupting the RIG-I signaling pathway. Moderately affects the type II interferon signaling. Prevents PP1alpha/gamma-mediated dephosphorylation of host IFIH1/MDA5 and thus blocks its activation. This is Non-structural protein V (P/V) from Homo sapiens (Human).